The sequence spans 90 residues: Small ribosomal subunit protein uS15 (90 aa).

This sequence belongs to the universal ribosomal protein uS15 family. In terms of assembly, part of the 30S ribosomal subunit. Forms a bridge to the 50S subunit in the 70S ribosome, contacting the 23S rRNA.

One of the primary rRNA binding proteins, it binds directly to 16S rRNA where it helps nucleate assembly of the platform of the 30S subunit by binding and bridging several RNA helices of the 16S rRNA. Its function is as follows. Forms an intersubunit bridge (bridge B4) with the 23S rRNA of the 50S subunit in the ribosome. The chain is Small ribosomal subunit protein uS15 from Campylobacter jejuni subsp. doylei (strain ATCC BAA-1458 / RM4099 / 269.97).